We begin with the raw amino-acid sequence, 180 residues long: Flavodoxin B (180 aa).

The Flavodoxin-like domain maps to 4 to 173; it reads IGLFFGSNTG…RVAAWLAQIA (170 aa).

Belongs to the flavodoxin family. Requires FMN as cofactor.

Functionally, low-potential electron donor to a number of redox enzymes. NifF is the electron donor to nitrogenase. This is Flavodoxin B (nifF) from Azotobacter chroococcum mcd 1.